The following is a 201-amino-acid chain: Putative lipoprotein LppC (201 aa).

An N-terminal signal peptide occupies residues 1–23 (MTSTLHRTPLATAGLALVVALGG). C24 is lipidated: N-palmitoyl cysteine. C24 is lipidated: S-diacylglycerol cysteine. Prevents bacterial uptake by a human macrophage-like cell line regions lie at residues 77–96 (GANV…AELA), 97–116 (LVVD…IVTG), and 117–136 (IAPG…GHSV). The tract at residues 122–141 (GSTADGQTPAGGHSVPNSGG) is disordered.

It belongs to the UPF0098 family.

The protein localises to the cell membrane. It localises to the cell surface. Probably involved in bacterial recognition and uptake by its host (human). The protein is Putative lipoprotein LppC of Mycobacterium tuberculosis (strain ATCC 25618 / H37Rv).